A 159-amino-acid chain; its full sequence is Large ribosomal subunit protein uL15 (159 aa).

Basic and acidic residues predominate over residues 1-18 (MKLNEIRDNEGSSKDRIR). Residues 1–37 (MKLNEIRDNEGSSKDRIRVGRGIGSGKGKTGGRGVKG) are disordered. Residues 21–35 (RGIGSGKGKTGGRGV) show a composition bias toward gly residues.

This sequence belongs to the universal ribosomal protein uL15 family. As to quaternary structure, part of the 50S ribosomal subunit.

Binds to the 23S rRNA. The protein is Large ribosomal subunit protein uL15 of Agrobacterium fabrum (strain C58 / ATCC 33970) (Agrobacterium tumefaciens (strain C58)).